The primary structure comprises 550 residues: Methionine--tRNA ligase (550 aa).

A 'HIGH' region motif is present at residues 13-23 (PYANGPLHFGH). Residues cysteine 145, cysteine 148, cysteine 158, and cysteine 161 each coordinate Zn(2+). A 'KMSKS' region motif is present at residues 331-335 (QFSKS). ATP is bound at residue lysine 334.

This sequence belongs to the class-I aminoacyl-tRNA synthetase family. MetG type 1 subfamily. In terms of assembly, monomer. Requires Zn(2+) as cofactor.

The protein resides in the cytoplasm. It carries out the reaction tRNA(Met) + L-methionine + ATP = L-methionyl-tRNA(Met) + AMP + diphosphate. Is required not only for elongation of protein synthesis but also for the initiation of all mRNA translation through initiator tRNA(fMet) aminoacylation. This chain is Methionine--tRNA ligase, found in Chlamydia trachomatis serovar L2b (strain UCH-1/proctitis).